Here is a 143-residue protein sequence, read N- to C-terminus: MQVLAKENIKLNQTVSSKEEAIKLAGQTLIDNGYVTEDYISKMFEREETSSTFMGNFIAIPHGTEEAKSEVLHSGISIIQIPEGVEYGEGNTAKVVFGIAGKNNEHLDILSNIAIICSEEENIERLISAKSEEDLIAIFNEVN.

The PTS EIIA type-2 domain maps to 2 to 142 (QVLAKENIKL…EDLIAIFNEV (141 aa)). The active-site Tele-phosphohistidine intermediate is His-62. His-62 is modified (phosphohistidine; by HPr). Phosphoserine is present on Ser-74.

Its subcellular location is the cytoplasm. Functionally, the phosphoenolpyruvate-dependent sugar phosphotransferase system (sugar PTS), a major carbohydrate active transport system, catalyzes the phosphorylation of incoming sugar substrates concomitantly with their translocation across the cell membrane. The enzyme II CmtAB PTS system is involved in D-mannitol transport. The sequence is that of Mannitol-specific phosphotransferase enzyme IIA component (mtlF) from Bacillus subtilis (strain 168).